We begin with the raw amino-acid sequence, 456 residues long: Glutathione reductase (456 aa).

FAD is bound by residues Ser-14, Gly-15, Glu-34, Thr-41, Cys-42, and Lys-50. Ser-14 contributes to the glutathione binding site. Cysteines 42 and 47 form a disulfide. Tyr-99 serves as a coordination point for glutathione. Position 115 (Gly-115) interacts with FAD. Residues Ala-180, Ile-183, Glu-186, Arg-203, Arg-209, and Gly-267 each coordinate NADP(+). FAD is bound at residue Asp-308. Glu-315 serves as a coordination point for NADP(+). Thr-317 contributes to the FAD binding site. Arg-325 provides a ligand contact to glutathione. Val-348 contacts NADP(+). His-445 provides a ligand contact to FAD. His-445 (proton acceptor) is an active-site residue.

The protein belongs to the class-I pyridine nucleotide-disulfide oxidoreductase family. As to quaternary structure, homodimer. Requires FAD as cofactor.

Its subcellular location is the cytoplasm. The catalysed reaction is 2 glutathione + NADP(+) = glutathione disulfide + NADPH + H(+). Catalyzes the reduction of glutathione disulfide (GSSG) to reduced glutathione (GSH). Constitutes the major mechanism to maintain a high GSH:GSSG ratio in the cytosol. The protein is Glutathione reductase (gor) of Haemophilus influenzae (strain ATCC 51907 / DSM 11121 / KW20 / Rd).